The chain runs to 845 residues: Molybdenum cofactor sulfurase (845 aa).

The residue at position 240 (Lys-240) is an N6-(pyridoxal phosphate)lysine. The active site involves Cys-404. In terms of domain architecture, MOSC spans 666-840; the sequence is SFPQDSSPSS…LMVGDTVTPS (175 aa).

Belongs to the class-V pyridoxal-phosphate-dependent aminotransferase family. MOCOS subfamily. The cofactor is pyridoxal 5'-phosphate.

It catalyses the reaction Mo-molybdopterin + L-cysteine + AH2 = thio-Mo-molybdopterin + L-alanine + A + H2O. The protein operates within cofactor biosynthesis; molybdopterin biosynthesis. Sulfurates the molybdenum cofactor. Sulfation of molybdenum is essential for xanthine dehydrogenase (XDH) and aldehyde oxidase (ADO) enzymes in which molybdenum cofactor is liganded by 1 oxygen and 1 sulfur atom in active form. The polypeptide is Molybdenum cofactor sulfurase (Aspergillus clavatus (strain ATCC 1007 / CBS 513.65 / DSM 816 / NCTC 3887 / NRRL 1 / QM 1276 / 107)).